A 255-amino-acid polypeptide reads, in one-letter code: 5'-nucleotidase SurE (255 aa).

Residues Asp8, Asp9, Ser40, and Asn93 each coordinate a divalent metal cation.

The protein belongs to the SurE nucleotidase family. The cofactor is a divalent metal cation.

It localises to the cytoplasm. It catalyses the reaction a ribonucleoside 5'-phosphate + H2O = a ribonucleoside + phosphate. Nucleotidase that shows phosphatase activity on nucleoside 5'-monophosphates. The chain is 5'-nucleotidase SurE from Rhodopseudomonas palustris (strain BisB18).